The chain runs to 193 residues: Cilia- and flagella-associated protein 20 (193 aa).

Belongs to the CFAP20 family. In terms of assembly, microtubule inner protein component of sperm flagellar doublet microtubules.

It is found in the nucleus. Its subcellular location is the cytoplasm. The protein localises to the cytoskeleton. It localises to the microtubule organizing center. The protein resides in the centrosome. It is found in the centriole. Its subcellular location is the cilium basal body. The protein localises to the cilium axoneme. It localises to the flagellum axoneme. Its function is as follows. Cilium- and flagellum-specific protein that plays a role in axonemal structure organization and motility. Microtubule inner protein (MIP) part of the dynein-decorated doublet microtubules (DMTs) in cilia axoneme, which is required for motile cilia beating. Involved in the regulation of the size and morphology of cilia. Required for axonemal microtubules polyglutamylation. The protein is Cilia- and flagella-associated protein 20 of Homo sapiens (Human).